Here is a 298-residue protein sequence, read N- to C-terminus: ATP phosphoribosyltransferase (298 aa).

This sequence belongs to the ATP phosphoribosyltransferase family. Long subfamily. It depends on Mg(2+) as a cofactor.

The protein resides in the cytoplasm. It carries out the reaction 1-(5-phospho-beta-D-ribosyl)-ATP + diphosphate = 5-phospho-alpha-D-ribose 1-diphosphate + ATP. Its pathway is amino-acid biosynthesis; L-histidine biosynthesis; L-histidine from 5-phospho-alpha-D-ribose 1-diphosphate: step 1/9. Its activity is regulated as follows. Feedback inhibited by histidine. Catalyzes the condensation of ATP and 5-phosphoribose 1-diphosphate to form N'-(5'-phosphoribosyl)-ATP (PR-ATP). Has a crucial role in the pathway because the rate of histidine biosynthesis seems to be controlled primarily by regulation of HisG enzymatic activity. The polypeptide is ATP phosphoribosyltransferase (Tolumonas auensis (strain DSM 9187 / NBRC 110442 / TA 4)).